Reading from the N-terminus, the 77-residue chain is U14-theraphotoxin-Cg1b (77 aa).

Positions 1–21 are cleaved as a signal peptide; that stretch reads MKTSVLLVILGIAAITVQCTA. The propeptide occupies 22 to 49; it reads SESVEQDSLRTFVDAVLGWNAEMASEAR. Cystine bridges form between cysteine 50–cysteine 64, cysteine 57–cysteine 69, and cysteine 63–cysteine 75.

Belongs to the neurotoxin 10 (Hwtx-1) family. 65 (Jztx-21) subfamily. In terms of tissue distribution, expressed by the venom gland.

The protein localises to the secreted. Its function is as follows. Probable ion channel inhibitor. This is U14-theraphotoxin-Cg1b from Chilobrachys guangxiensis (Chinese earth tiger tarantula).